A 366-amino-acid polypeptide reads, in one-letter code: UDP-N-acetylglucosamine--N-acetylmuramyl-(pentapeptide) pyrophosphoryl-undecaprenol N-acetylglucosamine transferase (366 aa).

Residues 22-24 (TGG), N134, R170, S198, I253, and Q298 contribute to the UDP-N-acetyl-alpha-D-glucosamine site.

It belongs to the glycosyltransferase 28 family. MurG subfamily.

It is found in the cell inner membrane. It carries out the reaction di-trans,octa-cis-undecaprenyl diphospho-N-acetyl-alpha-D-muramoyl-L-alanyl-D-glutamyl-meso-2,6-diaminopimeloyl-D-alanyl-D-alanine + UDP-N-acetyl-alpha-D-glucosamine = di-trans,octa-cis-undecaprenyl diphospho-[N-acetyl-alpha-D-glucosaminyl-(1-&gt;4)]-N-acetyl-alpha-D-muramoyl-L-alanyl-D-glutamyl-meso-2,6-diaminopimeloyl-D-alanyl-D-alanine + UDP + H(+). It functions in the pathway cell wall biogenesis; peptidoglycan biosynthesis. Cell wall formation. Catalyzes the transfer of a GlcNAc subunit on undecaprenyl-pyrophosphoryl-MurNAc-pentapeptide (lipid intermediate I) to form undecaprenyl-pyrophosphoryl-MurNAc-(pentapeptide)GlcNAc (lipid intermediate II). The polypeptide is UDP-N-acetylglucosamine--N-acetylmuramyl-(pentapeptide) pyrophosphoryl-undecaprenol N-acetylglucosamine transferase (Xylella fastidiosa (strain M12)).